Consider the following 166-residue polypeptide: NAD(P)H-quinone oxidoreductase subunit I, chloroplastic (166 aa).

4Fe-4S ferredoxin-type domains are found at residues 55–84 and 95–124; these read GRIH…VDWK and LNYS…MTEE. Residues Cys64, Cys67, Cys70, Cys74, Cys104, Cys107, Cys110, and Cys114 each coordinate [4Fe-4S] cluster.

The protein belongs to the complex I 23 kDa subunit family. NDH is composed of at least 16 different subunits, 5 of which are encoded in the nucleus. The cofactor is [4Fe-4S] cluster.

Its subcellular location is the plastid. The protein resides in the chloroplast thylakoid membrane. It carries out the reaction a plastoquinone + NADH + (n+1) H(+)(in) = a plastoquinol + NAD(+) + n H(+)(out). It catalyses the reaction a plastoquinone + NADPH + (n+1) H(+)(in) = a plastoquinol + NADP(+) + n H(+)(out). NDH shuttles electrons from NAD(P)H:plastoquinone, via FMN and iron-sulfur (Fe-S) centers, to quinones in the photosynthetic chain and possibly in a chloroplast respiratory chain. The immediate electron acceptor for the enzyme in this species is believed to be plastoquinone. Couples the redox reaction to proton translocation, and thus conserves the redox energy in a proton gradient. In Lasianthaea macrocephala (Lipochaeta macrocephala), this protein is NAD(P)H-quinone oxidoreductase subunit I, chloroplastic.